The chain runs to 800 residues: General transcription and DNA repair factor IIH helicase/translocase subunit XPB (800 aa).

The interval 1–27 (MSSGDSNLKRRRGGNTGQSSKSYNTWT) is disordered. Polar residues predominate over residues 17 to 27 (GQSSKSYNTWT). The 163-residue stretch at 329-491 (MFGNGRARSG…DLNFLIGPKL (163 aa)) folds into the Helicase ATP-binding domain. An ATP-binding site is contributed by 342-349 (LPCGAGKS). Positions 444-447 (DEVH) match the DEVH box motif. In terms of domain architecture, Helicase C-terminal spans 546–704 (RACEYLIRFH…ELPGIDQEVN (159 aa)). Residues 743-769 (GAKKSKSSAPTVSRTTGGSTRALSGGN) are disordered. Over residues 749–764 (SSAPTVSRTTGGSTRA) the composition is skewed to polar residues.

It belongs to the helicase family. RAD25/XPB subfamily. As to quaternary structure, component of the 7-subunit TFIIH core complex composed of XPB/repB, XPD/repD, gtf2h1, gtf2h2, gtf2h3, gtf2h4 and gtf2h5, which is active in NER. The core complex associates with the 3-subunit CDK-activating kinase (CAK) module composed of cycH/cyclin H, cdk7 and mnat1 to form the 10-subunit holoenzyme (holo-TFIIH) active in transcription.

It is found in the nucleus. The catalysed reaction is Couples ATP hydrolysis with the unwinding of duplex DNA by translocating in the 3'-5' direction.. The enzyme catalyses ATP + H2O = ADP + phosphate + H(+). ATP-dependent 3'-5' DNA helicase/translocase; binds dsDNA rather than ssDNA, unzipping it in a translocase rather than classical helicase activity. Component of the general transcription and DNA repair factor IIH (TFIIH) core complex. When complexed to CDK-activating kinase (CAK), involved in RNA transcription by RNA polymerase II. The ATPase activity of XPB/ERCC3, but not its helicase activity, is required for DNA opening; it may wrap around the damaged DNA wedging it open, causing localized melting and twisting that allows XPD/ERCC2 helicase to anchor. The ATP-dependent helicase activity of XPB/ERCC3 may be required for promoter escape. Also involved in transcription-coupled nucleotide excision repair (NER) of damaged DNA. In NER, TFIIH acts by opening DNA around the lesion to allow the excision of the damaged oligonucleotide and its replacement by a new DNA fragment. The structure of the TFIIH transcription complex differs from the NER-TFIIH complex. The polypeptide is General transcription and DNA repair factor IIH helicase/translocase subunit XPB (Dictyostelium discoideum (Social amoeba)).